A 340-amino-acid chain; its full sequence is Methane monooxygenase component C (340 aa).

A 2Fe-2S ferredoxin-type domain is found at Met-1–Tyr-92. Cys-37, Cys-41, Cys-44, and Cys-76 together coordinate [2Fe-2S] cluster. The 105-residue stretch at Gln-101–His-205 folds into the FAD-binding FR-type domain. Val-215–Arg-229 is a binding site for FAD.

In terms of assembly, the soluble methane monooxygenase (sMMO) consists of four components A/MMOH (composed of alpha/MmoX, beta/MmoY and gamma/MmoZ), B/MMOB (MmoB), C/MMOR (MmoC) and D/MMOD (MmoD). It depends on [2Fe-2S] cluster as a cofactor.

It carries out the reaction methane + NADH + O2 + H(+) = methanol + NAD(+) + H2O. The catalysed reaction is methane + NADPH + O2 + H(+) = methanol + NADP(+) + H2O. In terms of biological role, responsible for the initial oxygenation of methane to methanol in methanotrophs. It also catalyzes the monohydroxylation of a variety of unactivated alkenes, alicyclic, aromatic and heterocyclic compounds. The component C is the iron-sulfur flavoprotein of sMMO. This chain is Methane monooxygenase component C (mmoC), found in Methylosinus trichosporium.